A 381-amino-acid chain; its full sequence is Queuine tRNA-ribosyltransferase (381 aa).

D92 (proton acceptor) is an active-site residue. Substrate contacts are provided by residues 92–96 (DSGGF), D146, Q190, and G217. The tract at residues 248–254 (GVGRPED) is RNA binding. The active-site Nucleophile is D267. The RNA binding; important for wobble base 34 recognition stretch occupies residues 272-276 (TRNAR). C305, C307, C310, and H337 together coordinate Zn(2+).

Belongs to the queuine tRNA-ribosyltransferase family. In terms of assembly, homodimer. Within each dimer, one monomer is responsible for RNA recognition and catalysis, while the other monomer binds to the replacement base PreQ1. Zn(2+) serves as cofactor.

The catalysed reaction is 7-aminomethyl-7-carbaguanine + guanosine(34) in tRNA = 7-aminomethyl-7-carbaguanosine(34) in tRNA + guanine. The protein operates within tRNA modification; tRNA-queuosine biosynthesis. Functionally, catalyzes the base-exchange of a guanine (G) residue with the queuine precursor 7-aminomethyl-7-deazaguanine (PreQ1) at position 34 (anticodon wobble position) in tRNAs with GU(N) anticodons (tRNA-Asp, -Asn, -His and -Tyr). Catalysis occurs through a double-displacement mechanism. The nucleophile active site attacks the C1' of nucleotide 34 to detach the guanine base from the RNA, forming a covalent enzyme-RNA intermediate. The proton acceptor active site deprotonates the incoming PreQ1, allowing a nucleophilic attack on the C1' of the ribose to form the product. After dissociation, two additional enzymatic reactions on the tRNA convert PreQ1 to queuine (Q), resulting in the hypermodified nucleoside queuosine (7-(((4,5-cis-dihydroxy-2-cyclopenten-1-yl)amino)methyl)-7-deazaguanosine). The sequence is that of Queuine tRNA-ribosyltransferase from Xanthomonas euvesicatoria pv. vesicatoria (strain 85-10) (Xanthomonas campestris pv. vesicatoria).